A 287-amino-acid chain; its full sequence is MTFLDMLRAAERQNGSMLCVGLDPEPTRFPAHYSGDVSKIYDFCAAIVDATADLVMAFKPQIAYFAAHRAEPQLERLIAHMRRAAPHVPVILDAKRGDIGSTAEQYAKEAFERYGADAVTLSPFMGFDSLQPYLRYHGKGAFLLCRTSNPGGDDLQSQRLASVEGTPLLYEHIARLAQGPWNLNGQLGLVVGATYPAELERVRALAPTLPLLIPGVGAQGGDCAATVRAAWRAAPGTSGEALDTLAPIIVNSSRAILYASSGADFAQAARREALATRDLLQAARQPA.

Lys95 (proton donor) is an active-site residue.

This sequence belongs to the OMP decarboxylase family. Type 2 subfamily.

The catalysed reaction is orotidine 5'-phosphate + H(+) = UMP + CO2. The protein operates within pyrimidine metabolism; UMP biosynthesis via de novo pathway; UMP from orotate: step 2/2. In Albidiferax ferrireducens (strain ATCC BAA-621 / DSM 15236 / T118) (Rhodoferax ferrireducens), this protein is Orotidine 5'-phosphate decarboxylase.